A 505-amino-acid chain; its full sequence is UDP-N-acetylmuramyl-tripeptide synthetase (505 aa).

Ser-35 lines the UDP-N-acetyl-alpha-D-muramoyl-L-alanyl-D-glutamate pocket. Gly-118 to Ser-124 lines the ATP pocket. UDP-N-acetyl-alpha-D-muramoyl-L-alanyl-D-glutamate contacts are provided by residues Ser-163 to Thr-164, Thr-190, and Arg-200. Residue Lys-232 is modified to N6-carboxylysine.

It belongs to the MurCDEF family. MurE subfamily. Post-translationally, carboxylation is probably crucial for Mg(2+) binding and, consequently, for the gamma-phosphate positioning of ATP.

It localises to the cytoplasm. It functions in the pathway cell wall biogenesis; peptidoglycan biosynthesis. In terms of biological role, catalyzes the addition of an amino acid to the nucleotide precursor UDP-N-acetylmuramoyl-L-alanyl-D-glutamate (UMAG) in the biosynthesis of bacterial cell-wall peptidoglycan. This is UDP-N-acetylmuramyl-tripeptide synthetase from Borreliella afzelii (strain PKo) (Borrelia afzelii).